Consider the following 417-residue polypeptide: MQGPTLAVLGALLAVAVSLPTPAPRVTVYVDPPAYPMPRYNYTERWHTTGPIPSPFADGREQPVEVRYAASAAACDMLALIADPQVGRTLWEAVRRHARAYNATVIWYKIESGCARPLYYMEYTECEPRKHFGYCRYRTPPFWDSFLAGFAYPTDDELGLIMAAPARLVEGQYRRALYIDGTVAYTDFMVWLPAGDCWFSKLDAARGYTFSACFPAREYEQNKVLRLTYLTQYYPQEAHKAIVDYWFMRHGGVVPPYFEESKGYEPPPAADGGSPAPPGDDEAREDEGETEDGAAGREGNGGPPGPEGDGESPTPEANGGAEGEPKPGPSPDADRPEGWPSLEAITHPPPAPATPAAPDAVPVGVGIGIAAAAIACVAAAAAGAYFVYTRRRGAGPLPRKPKKLPAFGNVNYSALPG.

The first 18 residues, methionine 1–serine 18, serve as a signal peptide directing secretion. Topologically, residues leucine 19–alanine 360 are virion surface. Asparagine 41 and asparagine 102 each carry an N-linked (GlcNAc...) asparagine; by host glycan. Cystine bridges form between cysteine 75–cysteine 197, cysteine 114–cysteine 213, and cysteine 126–cysteine 135. The tract at residues glutamate 259–proline 355 is disordered. The span at glycine 279–aspartate 292 shows a compositional bias: acidic residues. A helical membrane pass occupies residues valine 361–threonine 389. Over arginine 390–glycine 417 the chain is Intravirion.

The protein belongs to the herpesviridae glycoprotein D family.

The protein resides in the virion membrane. Envelope glycoprotein that binds to host cell entry receptors, promoting the virus entry into host cells. May trigger fusion with host membrane, by recruiting the fusion machinery composed of gB and gH/gL. The sequence is that of Envelope glycoprotein D (gD) from Bovine herpesvirus 1.2 (strain ST) (BoHV-1).